Here is a 39-residue protein sequence, read N- to C-terminus: Cytochrome b559 subunit beta (39 aa).

A helical transmembrane segment spans residues 14-30 (WLAVHGLAVPTVFFLGS). Heme is bound at residue His18.

It belongs to the PsbE/PsbF family. As to quaternary structure, heterodimer of an alpha subunit and a beta subunit. PSII is composed of 1 copy each of membrane proteins PsbA, PsbB, PsbC, PsbD, PsbE, PsbF, PsbH, PsbI, PsbJ, PsbK, PsbL, PsbM, PsbT, PsbX, PsbY, PsbZ, Psb30/Ycf12, at least 3 peripheral proteins of the oxygen-evolving complex and a large number of cofactors. It forms dimeric complexes. It depends on heme b as a cofactor.

Its subcellular location is the plastid. The protein resides in the chloroplast thylakoid membrane. In terms of biological role, this b-type cytochrome is tightly associated with the reaction center of photosystem II (PSII). PSII is a light-driven water:plastoquinone oxidoreductase that uses light energy to abstract electrons from H(2)O, generating O(2) and a proton gradient subsequently used for ATP formation. It consists of a core antenna complex that captures photons, and an electron transfer chain that converts photonic excitation into a charge separation. The sequence is that of Cytochrome b559 subunit beta from Pinus koraiensis (Korean pine).